The primary structure comprises 257 residues: uncharacterized protein (257 aa).

Disordered regions lie at residues 86–119 (SDEE…RPLS) and 182–206 (STPL…TDGQ). A compositionally biased stretch (polar residues) spans 196–206 (PTPTSQLTDGQ).

This is an uncharacterized protein from Invertebrate iridescent virus 3 (IIV-3).